We begin with the raw amino-acid sequence, 132 residues long: Ribosome-binding factor A (132 aa).

This sequence belongs to the RbfA family. In terms of assembly, monomer. Binds 30S ribosomal subunits, but not 50S ribosomal subunits or 70S ribosomes.

It localises to the cytoplasm. In terms of biological role, one of several proteins that assist in the late maturation steps of the functional core of the 30S ribosomal subunit. Associates with free 30S ribosomal subunits (but not with 30S subunits that are part of 70S ribosomes or polysomes). Required for efficient processing of 16S rRNA. May interact with the 5'-terminal helix region of 16S rRNA. In Pectobacterium atrosepticum (strain SCRI 1043 / ATCC BAA-672) (Erwinia carotovora subsp. atroseptica), this protein is Ribosome-binding factor A.